The following is a 695-amino-acid chain: DNA ligase (695 aa).

NAD(+) is bound by residues 44-48 (DAEYD), 93-94 (SL), and Glu124. Lys126 serves as the catalytic N6-AMP-lysine intermediate. 4 residues coordinate NAD(+): Arg147, Glu187, Lys304, and Lys328. Residues Cys422, Cys425, Cys440, and Cys445 each coordinate Zn(2+). Residues 606-695 (TVQGPLAGKT…GIEVEAAARS (90 aa)) enclose the BRCT domain.

The protein belongs to the NAD-dependent DNA ligase family. LigA subfamily. Mg(2+) is required as a cofactor. It depends on Mn(2+) as a cofactor.

It carries out the reaction NAD(+) + (deoxyribonucleotide)n-3'-hydroxyl + 5'-phospho-(deoxyribonucleotide)m = (deoxyribonucleotide)n+m + AMP + beta-nicotinamide D-nucleotide.. In terms of biological role, DNA ligase that catalyzes the formation of phosphodiester linkages between 5'-phosphoryl and 3'-hydroxyl groups in double-stranded DNA using NAD as a coenzyme and as the energy source for the reaction. It is essential for DNA replication and repair of damaged DNA. The chain is DNA ligase from Thermomicrobium roseum (strain ATCC 27502 / DSM 5159 / P-2).